The sequence spans 890 residues: Protein translocase subunit SecA (890 aa).

ATP is bound by residues Q85, 103–107 (GEGKT), and D491.

The protein belongs to the SecA family. As to quaternary structure, monomer and homodimer. Part of the essential Sec protein translocation apparatus which comprises SecA, SecYEG and auxiliary proteins SecDF. Other proteins may also be involved.

It is found in the cell membrane. The protein resides in the cytoplasm. The enzyme catalyses ATP + H2O + cellular proteinSide 1 = ADP + phosphate + cellular proteinSide 2.. In terms of biological role, part of the Sec protein translocase complex. Interacts with the SecYEG preprotein conducting channel. Has a central role in coupling the hydrolysis of ATP to the transfer of proteins into and across the cell membrane, serving as an ATP-driven molecular motor driving the stepwise translocation of polypeptide chains across the membrane. The polypeptide is Protein translocase subunit SecA (Mycoplasmoides gallisepticum (strain R(low / passage 15 / clone 2)) (Mycoplasma gallisepticum)).